The following is a 267-amino-acid chain: Large ribosomal subunit protein bL9m (267 aa).

A mitochondrion-targeting transit peptide spans 1-52; sequence MAAPVVTAPGRALLRAGAGRLLRGGVQELLRPRHEGNAPDLACNFSLSQNRG.

It belongs to the bacterial ribosomal protein bL9 family. In terms of assembly, component of the mitochondrial large ribosomal subunit (mt-LSU). Mature mammalian 55S mitochondrial ribosomes consist of a small (28S) and a large (39S) subunit. The 28S small subunit contains a 12S ribosomal RNA (12S mt-rRNA) and 30 different proteins. The 39S large subunit contains a 16S rRNA (16S mt-rRNA), a copy of mitochondrial valine transfer RNA (mt-tRNA(Val)), which plays an integral structural role, and 52 different proteins.

The protein localises to the mitochondrion. The protein is Large ribosomal subunit protein bL9m (MRPL9) of Homo sapiens (Human).